The following is a 218-amino-acid chain: Small ribosomal subunit protein uS3c (218 aa).

The region spanning isoleucine 43–alanine 118 is the KH type-2 domain.

It belongs to the universal ribosomal protein uS3 family. In terms of assembly, part of the 30S ribosomal subunit.

Its subcellular location is the plastid. The protein localises to the chloroplast. In Buxus microphylla (Littleleaf boxwood), this protein is Small ribosomal subunit protein uS3c (rps3).